The primary structure comprises 122 residues: Large ribosomal subunit protein uL14 (122 aa).

It belongs to the universal ribosomal protein uL14 family. As to quaternary structure, part of the 50S ribosomal subunit. Forms a cluster with proteins L3 and L19. In the 70S ribosome, L14 and L19 interact and together make contacts with the 16S rRNA in bridges B5 and B8.

Binds to 23S rRNA. Forms part of two intersubunit bridges in the 70S ribosome. In Leptothrix cholodnii (strain ATCC 51168 / LMG 8142 / SP-6) (Leptothrix discophora (strain SP-6)), this protein is Large ribosomal subunit protein uL14.